We begin with the raw amino-acid sequence, 590 residues long: Negative elongation factor D (590 aa).

Residues 15-43 (YGSAAEWGDEADGGQQEDDSGEGEDDAEV) form a disordered region. Positions 21–43 (WGDEADGGQQEDDSGEGEDDAEV) are enriched in acidic residues.

The protein belongs to the NELF-D family. The NELF complex is composed of NELFA, NELFB, NELFCD and NELFE; NELFA and NELFCD form a stable subcomplex that binds primarily through NELFCD to the N-terminus of NELFB. Binds RNA which may help to stabilize the NELF complex on nucleic acid. In vitro, the NELFA:NELFCD subcomplex binds to ssDNA and ssRNA in a sequence- and structure-dependent manner. Interacts with ARAF1. Interacts with PCF11. Interacts with NELFB. Interacts with KAT8.

The protein resides in the nucleus. Functionally, essential component of the NELF complex, a complex that negatively regulates the elongation of transcription by RNA polymerase II. The NELF complex, which acts via an association with the DSIF complex and causes transcriptional pausing, is counteracted by the P-TEFb kinase complex. The polypeptide is Negative elongation factor D (NELFCD) (Pongo abelii (Sumatran orangutan)).